A 368-amino-acid polypeptide reads, in one-letter code: Flagellar P-ring protein (368 aa).

The signal sequence occupies residues 1 to 24 (MTLTRPLALISALAALILALPADA).

The protein belongs to the FlgI family. The basal body constitutes a major portion of the flagellar organelle and consists of four rings (L,P,S, and M) mounted on a central rod.

Its subcellular location is the periplasm. It localises to the bacterial flagellum basal body. Functionally, assembles around the rod to form the L-ring and probably protects the motor/basal body from shearing forces during rotation. This chain is Flagellar P-ring protein, found in Methylobacillus flagellatus (strain ATCC 51484 / DSM 6875 / VKM B-1610 / KT).